A 362-amino-acid polypeptide reads, in one-letter code: Oxygen-dependent coproporphyrinogen-III oxidase (362 aa).

Positions 12-31 (RQENDQSTPQLELPPTDSRD) are disordered. Ser118 contacts substrate. A divalent metal cation-binding residues include His122 and His132. Residue His132 is the Proton donor of the active site. Residue 134-136 (NYR) coordinates substrate. Residues His166 and His196 each contribute to the a divalent metal cation site. An important for dimerization region spans residues 286 to 321 (YVEFNLVWDRGTIFGLQTNGRTESILMSLPPLVRWE).

The protein belongs to the aerobic coproporphyrinogen-III oxidase family. In terms of assembly, homodimer. A divalent metal cation is required as a cofactor.

The protein localises to the cytoplasm. The catalysed reaction is coproporphyrinogen III + O2 + 2 H(+) = protoporphyrinogen IX + 2 CO2 + 2 H2O. The protein operates within porphyrin-containing compound metabolism; protoporphyrin-IX biosynthesis; protoporphyrinogen-IX from coproporphyrinogen-III (O2 route): step 1/1. Functionally, involved in the heme and chlorophyll biosynthesis. Catalyzes the aerobic oxidative decarboxylation of propionate groups of rings A and B of coproporphyrinogen-III to yield the vinyl groups in protoporphyrinogen-IX. This is Oxygen-dependent coproporphyrinogen-III oxidase from Synechococcus sp. (strain CC9902).